Here is a 202-residue protein sequence, read N- to C-terminus: Small ribosomal subunit protein uS4c (202 aa).

The S4 RNA-binding domain occupies 90-153 (MRLDNVIFRL…KSETIISKNI (64 aa)).

This sequence belongs to the universal ribosomal protein uS4 family. Part of the 30S ribosomal subunit. Contacts protein S5. The interaction surface between S4 and S5 is involved in control of translational fidelity.

It is found in the plastid. The protein localises to the chloroplast. Functionally, one of the primary rRNA binding proteins, it binds directly to 16S rRNA where it nucleates assembly of the body of the 30S subunit. Its function is as follows. With S5 and S12 plays an important role in translational accuracy. The chain is Small ribosomal subunit protein uS4c (rps4) from Arbusculohypopterygium arbuscula (Moss).